The chain runs to 87 residues: Small ribosomal subunit protein bS20 (87 aa).

The protein belongs to the bacterial ribosomal protein bS20 family.

Its function is as follows. Binds directly to 16S ribosomal RNA. The sequence is that of Small ribosomal subunit protein bS20 from Lachnoclostridium phytofermentans (strain ATCC 700394 / DSM 18823 / ISDg) (Clostridium phytofermentans).